We begin with the raw amino-acid sequence, 283 residues long: ATP synthase gamma chain (283 aa).

It belongs to the ATPase gamma chain family. In terms of assembly, F-type ATPases have 2 components, CF(1) - the catalytic core - and CF(0) - the membrane proton channel. CF(1) has five subunits: alpha(3), beta(3), gamma(1), delta(1), epsilon(1). CF(0) has three main subunits: a, b and c.

The protein resides in the cell membrane. Functionally, produces ATP from ADP in the presence of a proton gradient across the membrane. The gamma chain is believed to be important in regulating ATPase activity and the flow of protons through the CF(0) complex. The polypeptide is ATP synthase gamma chain (Desulforamulus reducens (strain ATCC BAA-1160 / DSM 100696 / MI-1) (Desulfotomaculum reducens)).